An 883-amino-acid polypeptide reads, in one-letter code: DNA double-strand break repair Rad50 ATPase (883 aa).

ATP-binding positions include lysine 12, 32–38 (NGSGKSS), and glutamine 137. A coiled-coil region spans residues 244–283 (ERYEESRTALADVEETIADVREAVAEAERERETLADRVSD). 2 disordered regions span residues 271–290 (ERER…RASD) and 305–326 (DDPD…REAV). Basic and acidic residues predominate over residues 313-326 (SAERDAVADQREAV). Coiled coils occupy residues 336 to 389 (AVSR…IEAL) and 414 to 452 (LDDA…LDEG). The 100-residue stretch at 407 to 506 (FGAAEAFLDD…RVDRGESLVA (100 aa)) folds into the Zinc-hook domain. Zn(2+) contacts are provided by cysteine 454 and cysteine 457. The tract at residues 508–565 (EDRVDDLEQQRERAVERRDEQADIADAKRDQAAEKRDRAADLDAEAEDARADAAAKRD) is disordered. Coiled coils occupy residues 571–604 (RETL…AADA) and 668–720 (KLQA…VTAL).

It belongs to the SMC family. RAD50 subfamily. In terms of assembly, homodimer. Forms a heterotetramer composed of two Mre11 subunits and two Rad50 subunits. Zn(2+) serves as cofactor.

Part of the Rad50/Mre11 complex, which is involved in the early steps of DNA double-strand break (DSB) repair. Rad50 controls the balance between DNA end bridging and DNA resection via ATP-dependent structural rearrangements of the Rad50/Mre11 complex. In Halobacterium salinarum (strain ATCC 700922 / JCM 11081 / NRC-1) (Halobacterium halobium), this protein is DNA double-strand break repair Rad50 ATPase.